The following is a 209-amino-acid chain: RNA chaperone ProQ (209 aa).

Residues 101–155 are disordered; it reads LAESKAKVQARRKEQAQKAREEGKAKAKPAANKKPQQPRRTNKPKVQKPTKPVET. Residues 111 to 125 are compositionally biased toward basic and acidic residues; that stretch reads RRKEQAQKAREEGKA. Residues 136-148 are compositionally biased toward basic residues; the sequence is QQPRRTNKPKVQK.

The protein belongs to the ProQ family.

Its subcellular location is the cytoplasm. Its function is as follows. RNA chaperone with significant RNA binding, RNA strand exchange and RNA duplexing activities. This Vibrio parahaemolyticus serotype O3:K6 (strain RIMD 2210633) protein is RNA chaperone ProQ.